We begin with the raw amino-acid sequence, 205 residues long: GTP cyclohydrolase-2 (205 aa).

49–53 (RIHSE) is a binding site for GTP. Residues cysteine 54, cysteine 65, and cysteine 67 each contribute to the Zn(2+) site. GTP is bound by residues glutamine 70, 92–94 (EGR), and threonine 114. The Proton acceptor role is filled by aspartate 126. Arginine 128 acts as the Nucleophile in catalysis. Residues threonine 149 and lysine 154 each contribute to the GTP site.

It belongs to the GTP cyclohydrolase II family. Requires Zn(2+) as cofactor.

It catalyses the reaction GTP + 4 H2O = 2,5-diamino-6-hydroxy-4-(5-phosphoribosylamino)-pyrimidine + formate + 2 phosphate + 3 H(+). Its pathway is cofactor biosynthesis; riboflavin biosynthesis; 5-amino-6-(D-ribitylamino)uracil from GTP: step 1/4. Catalyzes the conversion of GTP to 2,5-diamino-6-ribosylamino-4(3H)-pyrimidinone 5'-phosphate (DARP), formate and pyrophosphate. The protein is GTP cyclohydrolase-2 of Shewanella loihica (strain ATCC BAA-1088 / PV-4).